A 267-amino-acid chain; its full sequence is 3-methyl-2-oxobutanoate hydroxymethyltransferase (267 aa).

2 residues coordinate Mg(2+): Asp46 and Asp85. 3-methyl-2-oxobutanoate is bound by residues 46 to 47, Asp85, and Lys115; that span reads DS. Glu117 is a binding site for Mg(2+). The Proton acceptor role is filled by Glu184.

It belongs to the PanB family. As to quaternary structure, homodecamer; pentamer of dimers. Mg(2+) serves as cofactor.

The protein localises to the cytoplasm. The enzyme catalyses 3-methyl-2-oxobutanoate + (6R)-5,10-methylene-5,6,7,8-tetrahydrofolate + H2O = 2-dehydropantoate + (6S)-5,6,7,8-tetrahydrofolate. It functions in the pathway cofactor biosynthesis; (R)-pantothenate biosynthesis; (R)-pantoate from 3-methyl-2-oxobutanoate: step 1/2. Catalyzes the reversible reaction in which hydroxymethyl group from 5,10-methylenetetrahydrofolate is transferred onto alpha-ketoisovalerate to form ketopantoate. This chain is 3-methyl-2-oxobutanoate hydroxymethyltransferase, found in Geotalea uraniireducens (strain Rf4) (Geobacter uraniireducens).